Reading from the N-terminus, the 80-residue chain is Cytochrome c oxidase subunit 7A1, mitochondrial (80 aa).

Residues 1 to 21 (MRALRVSQALVRSFSSSTRSH) constitute a mitochondrion transit peptide. The Mitochondrial matrix portion of the chain corresponds to 22–46 (LENRVAEKQKLFQADNDLPVHLKGG). A helical transmembrane segment spans residues 47–75 (GMDNVLYRLTMTLTLGGTAYCLYCLGWAS). The Mitochondrial intermembrane portion of the chain corresponds to 76-80 (FPHKK).

This sequence belongs to the cytochrome c oxidase VIIa family. In terms of assembly, component of the complex IV (CIV, cytochrome c oxidase), a multisubunit enzyme composed of 14 subunits. The complex is composed of a catalytic core of 3 subunits MT-CO1, MT-CO2 and MT-CO3, encoded in the mitochondrial DNA, and 11 supernumerary subunits COX4I, COX5A, COX5B, COX6A, COX6B, COX6C, COX7A, COX7B, COX7C, COX8 and NDUFA4, which are encoded in the nuclear genome. The complex exists as a monomer or a dimer and forms supercomplexes (SCs) in the inner mitochondrial membrane with NADH-ubiquinone oxidoreductase (complex I, CI) and ubiquinol-cytochrome c oxidoreductase (cytochrome b-c1 complex, complex III, CIII), resulting in different assemblies (supercomplex SCI(1)III(2)IV(1) and megacomplex MCI(2)III(2)IV(2)).

The protein resides in the mitochondrion inner membrane. It participates in energy metabolism; oxidative phosphorylation. Component of the mitochondrial respiratory complex IV (CIV, also named cytochrome c oxidase complex), the last enzyme in the mitochondrial electron transport chain which drives oxidative phosphorylation. The CIV complex is the component of the respiratory chain that catalyzes the reduction of oxygen to water. Acts as an assembly factor that specifically drives the homodimerization of CIV complexes, mediating the formation of mitochondrial respiratory supercomplexes (respirasomes) containing two CIV: supercomplxes with two molecules of CIV show improved activity. Despite being highly expressed in brown adipose tissue, not required for thermogenesis. The polypeptide is Cytochrome c oxidase subunit 7A1, mitochondrial (Mus musculus (Mouse)).